The sequence spans 859 residues: MDQKYNPQAIESKWQKIWHQQKTFATPENLGDKETFYLLVMFPYPSGRIHMGHVRNYAIGDVIARYQRMQGKAVLHPMGWDAFGMPAENAAAQRKVHPRDWTYENIATMREELKSMGLSYDWDREFATCDEDYAHAEQVLFLRLYEKGLVYRKHAFVNWDPVDHTVLANEQVIDGCGWRSGAPVEQRELNQWFFRITHYADELLDNLQHMDGWPETVRTMQTNWIGKSHGVEFAFALEGYPGTLPVYTTRPDTLMGVTFCSVAAEHPIAAAVAENNPAAAAFIKTCQGVGTSEEALEKLEKKGFDTGIKAIHPITGESLPVYIANFVLMSYGTGAVMAVPAHDQRDFEFAKKHGIEIKVVIQPEGQTLHAEQLSEAYTGPGRLVNSGLFTGMDNEQAKQRVAEYFEAQGIGKGTINYRLRDWGISRQRYWGNPIPMVHCAACGVVPVPVAQLPIQLPNEVDFSEPGNPLERHPSWKTCDCPQCGQPARRETDTMDTFMESSWYFLRYCSPHMGGVPLDKAAVDRWMPVNQYVGGIEHAVLHLLYARFFHKALRDIGEVSCDEPFARLLTQGMVRKDTHRCAQHGWRYPKEVQERDGALYCIECGGAVTVGRNEKMSKSKHNVVDPNDLIAGYGADTARLFMLFAAPADRDLEWNDSGVDGAWRFLGRVWRLVLAAIERCGERQACTTTPADEQLKAFRSQLHNTIVKVTEDLNRQSFNTAIAAVMEMSNGAIATFKGEDRLTGEASALLWETAQVTVKLLHPYAPHMTEELWQRMGEQSLLSDTPWPLADAAALVKERVLIVIQVNGKLRSKLEVPVDMAQEAIEKLALADEHVKVQTEGKTIRKVVVVPGRLVNIVAN.

A 'HIGH' region motif is present at residues 43–53 (PYPSGRIHMGH). Residues 614-618 (KMSKS) carry the 'KMSKS' region motif. Residue Lys-617 participates in ATP binding.

This sequence belongs to the class-I aminoacyl-tRNA synthetase family.

Its subcellular location is the cytoplasm. The enzyme catalyses tRNA(Leu) + L-leucine + ATP = L-leucyl-tRNA(Leu) + AMP + diphosphate. In Magnetococcus marinus (strain ATCC BAA-1437 / JCM 17883 / MC-1), this protein is Leucine--tRNA ligase.